Here is a 320-residue protein sequence, read N- to C-terminus: Malate dehydrogenase (320 aa).

NAD(+)-binding positions include 10–15 (GSGMIG) and Asp-34. Residues Arg-83 and Arg-89 each contribute to the substrate site. NAD(+) is bound by residues Asn-96 and 119–121 (ITN). 2 residues coordinate substrate: Asn-121 and Arg-152. The active-site Proton acceptor is the His-176.

Belongs to the LDH/MDH superfamily. MDH type 3 family.

The enzyme catalyses (S)-malate + NAD(+) = oxaloacetate + NADH + H(+). In terms of biological role, catalyzes the reversible oxidation of malate to oxaloacetate. The protein is Malate dehydrogenase of Brucella melitensis biotype 1 (strain ATCC 23456 / CCUG 17765 / NCTC 10094 / 16M).